Consider the following 460-residue polypeptide: MNNIIKRFYKWPIRINEINKNNKDLIGKEIKVKGWVRNIRNQKSVSFIELGDGSSIKGLQIVGDKDSFSKLKYGSSIEVNGKLINSLGNDKEAIEVQLTEPYKLIGNCPDCYPLQPKNHSFEFLRDIAHIRSRGNSIGALLRVRNKSTQLIHQYFNDNGFINVHTPIITASDCEGGGEQFQIKSSLDTKESMFFGQPSFLTVSGQLEAEIYACSHSRVYTFGPTFRAEKSNTPRHLSEFWMIEPEMAFIDLNDNLDIAEDFCKYLIRNLLDSCKEDIEFFNKRIDTNLLSRLEKTLSTPFIRLEYKDAIQLLQNNNHPIKWGDDIQREQEKFITTHFGEIPVFVINWPKSIKPFYMRENEQTDHSNIMPTVSNMDLLVPTVGELIGGSIREERYDKLLNTINEMGMDKDQYSWYLDLRKYGTVPHGGFGLGFERFLQFVTGLQNIKDVIPIPRHQNYCKF.

Belongs to the class-II aminoacyl-tRNA synthetase family.

The protein resides in the mitochondrion matrix. The enzyme catalyses tRNA(Asn) + L-asparagine + ATP = L-asparaginyl-tRNA(Asn) + AMP + diphosphate + H(+). This Dictyostelium discoideum (Social amoeba) protein is Probable asparagine--tRNA ligase, mitochondrial (asnS2).